The following is a 143-amino-acid chain: MEYTNMMELNFLSKSQNESFARTVVAAFAAQLDPTIEEIADIKTAVSEAVTNCIIHGYENKIGIITIKAFISGNKITIEVIDEGKGIEDIEKAMQPLFTTRLEEERAGMGFTVMQTFMDELEVESTPGKGTLVRMTKYIGSDK.

It belongs to the anti-sigma-factor family.

It catalyses the reaction L-seryl-[protein] + ATP = O-phospho-L-seryl-[protein] + ADP + H(+). The enzyme catalyses L-threonyl-[protein] + ATP = O-phospho-L-threonyl-[protein] + ADP + H(+). In terms of biological role, binds to sigma F and blocks its ability to form an RNA polymerase holoenzyme (E-sigma F). Phosphorylates SpoIIAA on a serine residue. This phosphorylation may enable SpoIIAA to act as an anti-anti-sigma factor that counteracts SpoIIAB and thus releases sigma F from inhibition. The polypeptide is Anti-sigma F factor (Thermoanaerobacter pseudethanolicus (strain ATCC 33223 / 39E) (Clostridium thermohydrosulfuricum)).